We begin with the raw amino-acid sequence, 113 residues long: Large ribosomal subunit protein uL22 (113 aa).

The protein belongs to the universal ribosomal protein uL22 family. In terms of assembly, part of the 50S ribosomal subunit.

This protein binds specifically to 23S rRNA; its binding is stimulated by other ribosomal proteins, e.g. L4, L17, and L20. It is important during the early stages of 50S assembly. It makes multiple contacts with different domains of the 23S rRNA in the assembled 50S subunit and ribosome. In terms of biological role, the globular domain of the protein is located near the polypeptide exit tunnel on the outside of the subunit, while an extended beta-hairpin is found that lines the wall of the exit tunnel in the center of the 70S ribosome. The chain is Large ribosomal subunit protein uL22 from Oceanobacillus iheyensis (strain DSM 14371 / CIP 107618 / JCM 11309 / KCTC 3954 / HTE831).